The sequence spans 325 residues: Ubiquitin thioesterase OTU1 (325 aa).

Positions 7–86 (RIRSKTGVEN…NVSSISSNPG (80 aa)) are UBX-like. The 124-residue stretch at 123–246 (ATRRVTDDDN…GIHYDALSIC (124 aa)) folds into the OTU domain. Residues 128–134 (TDDDNSC) are cys-loop. Aspartate 131 is a catalytic residue. The active-site Nucleophile is cysteine 134. Positions 185-195 (IQNPKNWGGAI) are variable-loop. The his-loop stretch occupies residues 235-239 (YDGIH). Substrate is bound at residue isoleucine 238. Residue histidine 239 is part of the active site. The S2 site stretch occupies residues 265–270 (KDSLAK). Residues 292–316 (LICLNCNKTLKGEKEAAIHASTTGH) form a C2H2-type zinc finger. The active site involves histidine 316.

The protein resides in the cytoplasm. The enzyme catalyses Thiol-dependent hydrolysis of ester, thioester, amide, peptide and isopeptide bonds formed by the C-terminal Gly of ubiquitin (a 76-residue protein attached to proteins as an intracellular targeting signal).. Hydrolase that can remove conjugated ubiquitin from proteins and may therefore play an important regulatory role at the level of protein turnover by preventing degradation. The chain is Ubiquitin thioesterase OTU1 (yod1) from Dictyostelium discoideum (Social amoeba).